The chain runs to 187 residues: Pre-mRNA-splicing factor cwf7 (187 aa).

This sequence belongs to the SPF27 family. As to quaternary structure, belongs to the 40S cdc5-associated complex (or cwf complex), a spliceosome sub-complex reminiscent of a late-stage spliceosome composed of the U2, U5 and U6 snRNAs and at least brr2, cdc5, cwf2/prp3, cwf3/syf1, cwf4/syf3, cwf5/ecm2, spp42/cwf6, cwf7/spf27, cwf8, cwf9, cwf10, cwf11, cwf12, prp45/cwf13, cwf14, cwf15, cwf16, cwf17, cwf18, cwf19, cwf20, cwf21, cwf22, cwf23, cwf24, cwf25, cwf26, cyp7/cwf27, cwf28, cwf29/ist3, lea1, msl1, prp5/cwf1, prp10, prp12/sap130, prp17, prp22, sap61, sap62, sap114, sap145, slu7, smb1, smd1, smd3, smf1, smg1 and syf2.

It is found in the nucleus. In terms of biological role, involved in mRNA splicing. The polypeptide is Pre-mRNA-splicing factor cwf7 (cwf7) (Schizosaccharomyces pombe (strain 972 / ATCC 24843) (Fission yeast)).